The sequence spans 186 residues: Elongation factor P (186 aa).

Belongs to the elongation factor P family.

It is found in the cytoplasm. It participates in protein biosynthesis; polypeptide chain elongation. Involved in peptide bond synthesis. Stimulates efficient translation and peptide-bond synthesis on native or reconstituted 70S ribosomes in vitro. Probably functions indirectly by altering the affinity of the ribosome for aminoacyl-tRNA, thus increasing their reactivity as acceptors for peptidyl transferase. The sequence is that of Elongation factor P from Prochlorococcus marinus (strain MIT 9303).